The chain runs to 798 residues: Metabotropic glutamate receptor-like protein A (798 aa).

Residues 1–23 (MNKLKFLIILFITFLFNLKYINS) form the signal peptide. The Extracellular portion of the chain corresponds to 24 to 388 (LKQCKISVLL…DYSNSMKLGL (365 aa)). N-linked (GlcNAc...) asparagine glycosylation is found at N186, N275, and N320. Residues 389–409 (TIVSGFCILFCIISMVLVIMF) traverse the membrane as a helical segment. The Cytoplasmic portion of the chain corresponds to 410 to 419 (RHAKIIKSAS). Residues 420–440 (PIFCLLILFGCIIIFSGCIIF) form a helical membrane-spanning segment. Topologically, residues 441 to 447 (SLSPTDG) are extracellular. A helical transmembrane segment spans residues 448-468 (ICGARVWLLSIGYTIFLGSLL). Over 469-494 (VKNWRIWLLFDNPKLKKRSITNWKLY) the chain is Cytoplasmic. The helical transmembrane segment at 495–515 (PFVAGILAADVLILALWQGLG) threads the bilayer. Topologically, residues 516-545 (DIRSESRIGIDSLTKYQYANVCSSNDQGSV) are extracellular. The chain crosses the membrane as a helical span at residues 546-566 (ALYILLVFHGIKLLAACFISF). Residues 567-580 (KIKAVDIEEFNESK) lie on the Cytoplasmic side of the membrane. The helical transmembrane segment at 581–601 (PIASSIYIITFCLFIVIPLMV) threads the bilayer. Residues 602–609 (SPQSVASQ) lie on the Extracellular side of the membrane. A helical transmembrane segment spans residues 610–630 (VITIVVCAIVTTLISISLLFG). Residues 631-798 (SKFYMMATQG…NQSEIDPDDV (168 aa)) lie on the Cytoplasmic side of the membrane. A coiled-coil region spans residues 714–771 (AEQDSKLDLENQNDENEIENNQNNQNNIVEDCQKVEKLEKDENLEKDENLEKDENLEK). The span at 752-774 (EKDENLEKDENLEKDENLEKDNE) shows a compositional bias: basic and acidic residues. Positions 752–798 (EKDENLEKDENLEKDENLEKDNENQSIIQKKRLSKNFNQSEIDPDDV) are disordered.

In the N-terminal section; belongs to the BMP lipoprotein family. This sequence in the C-terminal section; belongs to the G-protein coupled receptor 3 family. GABA-B receptor subfamily.

It localises to the membrane. The protein resides in the cytoplasm. It is found in the cell cortex. The protein localises to the perinuclear region. Functionally, may play an important role in the terminal differentiation. This chain is Metabotropic glutamate receptor-like protein A (grlA), found in Dictyostelium discoideum (Social amoeba).